Reading from the N-terminus, the 307-residue chain is ATP synthase gamma chain (307 aa).

The protein belongs to the ATPase gamma chain family. F-type ATPases have 2 components, CF(1) - the catalytic core - and CF(0) - the membrane proton channel. CF(1) has five subunits: alpha(3), beta(3), gamma(1), delta(1), epsilon(1). CF(0) has three main subunits: a, b and c.

It localises to the cell membrane. Produces ATP from ADP in the presence of a proton gradient across the membrane. The gamma chain is believed to be important in regulating ATPase activity and the flow of protons through the CF(0) complex. In Bifidobacterium longum subsp. infantis (strain ATCC 15697 / DSM 20088 / JCM 1222 / NCTC 11817 / S12), this protein is ATP synthase gamma chain.